A 371-amino-acid chain; its full sequence is Cytochrome b (371 aa).

4 helical membrane-spanning segments follow: residues 25-45 (FGSM…FLAV), 69-90 (WLMQ…YIHI), 105-125 (WMSG…GYVL), and 170-190 (FFAL…LHII). Residues H75 and H89 each coordinate heme b. Heme b is bound by residues H174 and H188. A ubiquinone is bound at residue H193. 4 helical membrane passes run 218-238 (YKDL…VSFF), 280-300 (LGGA…PLTH), 312-332 (LSQL…WAAT), and 339-358 (YIII…ISTP).

Belongs to the cytochrome b family. As to quaternary structure, the cytochrome bc1 complex contains 3 respiratory subunits (MT-CYB, CYC1 and UQCRFS1), 2 core proteins (UQCRC1 and UQCRC2) and probably 6 low-molecular weight proteins. The cofactor is heme b.

Its subcellular location is the mitochondrion inner membrane. Component of the ubiquinol-cytochrome c reductase complex (complex III or cytochrome b-c1 complex) that is part of the mitochondrial respiratory chain. The b-c1 complex mediates electron transfer from ubiquinol to cytochrome c. Contributes to the generation of a proton gradient across the mitochondrial membrane that is then used for ATP synthesis. The chain is Cytochrome b (MT-CYB) from Python regius (Ball python).